The primary structure comprises 315 residues: Bifunctional pinoresinol-lariciresinol reductase (315 aa).

NADP(+) is bound by residues 14 to 20 (GGTGYLG), R39, and K48. The active-site Proton acceptor is the K142. Position 146 (R146) interacts with NADP(+). H274 contacts substrate.

The protein belongs to the NmrA-type oxidoreductase family. Isoflavone reductase subfamily. In terms of assembly, dimer.

The catalysed reaction is (+)-lariciresinol + NADP(+) = (+)-pinoresinol + NADPH + H(+). It catalyses the reaction (-)-secoisolariciresinol + NADP(+) = (+)-lariciresinol + NADPH + H(+). In terms of biological role, reductase involved in lignan (-)-hinokinin biosynthesis. Catalyzes the enantioselective conversion of (+)-pinoresinol into (+)-lariciresinol and of (+)-lariciresinol into (-)-secoisolariciresinol. Abstracts the 4R-hydride from the NADPH cofactor during catalysis. Has also a low phenylcoumaran benzylic ether reductase activity. In Linum corymbulosum (Linum), this protein is Bifunctional pinoresinol-lariciresinol reductase (PLR_Lc1).